The sequence spans 396 residues: Na(+)/H(+) antiporter NhaA 1 (396 aa).

12 consecutive transmembrane segments (helical) span residues 9–29 (LHNE…AMLI), 59–79 (LLLW…GLEL), 95–115 (VLPV…YVMF), 125–145 (GWAV…ALLG), 154–174 (LFLL…IAIF), 177–197 (SDLS…LFLL), 200–220 (IGVK…VAVL), 223–243 (GVHA…KGET), 260–280 (VVGL…SLAG), 281–301 (LGLN…LLLG), 332–352 (GVAL…SLAF), and 373–393 (ILSG…FSLA).

It belongs to the NhaA Na(+)/H(+) (TC 2.A.33) antiporter family.

It is found in the cell inner membrane. It catalyses the reaction Na(+)(in) + 2 H(+)(out) = Na(+)(out) + 2 H(+)(in). Na(+)/H(+) antiporter that extrudes sodium in exchange for external protons. The polypeptide is Na(+)/H(+) antiporter NhaA 1 (Magnetococcus marinus (strain ATCC BAA-1437 / JCM 17883 / MC-1)).